A 483-amino-acid polypeptide reads, in one-letter code: MQQTPLFKNHYFHQLPGFYTALQPTPLHGARLLYHSEGLASELGLSSDWFTPEQDDVWSGTRLLPGMEPLAQVYSGHQFGSWAGQLGDGRGILLGEQQLADGRSMDWHLKGAGLTPYSRMGDGRAVLRSAIREFLASEAMHHLGIPTTRALTIVTSQHPVQREQEEKGAMLLRVAESHVRFGHFEHFYYRREPEKVRQLVEYVIARHWPQWENDERRYELWFGDVVERTARLITHWQAVGFSHGVMNTDNMSILGLTIDYGPYGFLDAYQPDFICNHSDHRGRYAFDNQPAVGLWNLHRLGQALSGLMDTDTLERALARYEPALMQHYGTLMRAKLGLFTASPDDNDVLVGLLRLMQKEGSDYTRTFRLLADSEKQASRSPLRDEFIDRAAFDSWFATYRQRLMQEDQDDEERRRLMNATNPKYILRNYLAQMAIERAESDDTSALARLHQALCRPFDEQPDSHDLAALPPDWGKHLEISCSS.

Residues Gly-87, Gly-89, Arg-90, Lys-110, Asp-122, Gly-123, Arg-173, and Arg-180 each contribute to the ATP site. Catalysis depends on Asp-249, which acts as the Proton acceptor. Positions 250 and 259 each coordinate Mg(2+). Asp-259 provides a ligand contact to ATP.

It belongs to the SELO family. The cofactor is Mg(2+). Requires Mn(2+) as cofactor.

The catalysed reaction is L-seryl-[protein] + ATP = 3-O-(5'-adenylyl)-L-seryl-[protein] + diphosphate. The enzyme catalyses L-threonyl-[protein] + ATP = 3-O-(5'-adenylyl)-L-threonyl-[protein] + diphosphate. It catalyses the reaction L-tyrosyl-[protein] + ATP = O-(5'-adenylyl)-L-tyrosyl-[protein] + diphosphate. It carries out the reaction L-histidyl-[protein] + UTP = N(tele)-(5'-uridylyl)-L-histidyl-[protein] + diphosphate. The catalysed reaction is L-seryl-[protein] + UTP = O-(5'-uridylyl)-L-seryl-[protein] + diphosphate. The enzyme catalyses L-tyrosyl-[protein] + UTP = O-(5'-uridylyl)-L-tyrosyl-[protein] + diphosphate. In terms of biological role, nucleotidyltransferase involved in the post-translational modification of proteins. It can catalyze the addition of adenosine monophosphate (AMP) or uridine monophosphate (UMP) to a protein, resulting in modifications known as AMPylation and UMPylation. This is Protein nucleotidyltransferase YdiU from Pectobacterium atrosepticum (strain SCRI 1043 / ATCC BAA-672) (Erwinia carotovora subsp. atroseptica).